The chain runs to 527 residues: MDVKNSPSSLNSPVSYNCGQSILPLEPGPIYLPSSYVESRHEYSAVTFYSPAVMNYSIPNNSEDGPGRQTTSPNVLWPTPGHLSPLAIHCQPSVLYAEPQKSPWRETRSLEHTLPVNRETLKRKASGSSCASPATSPSSKRDAHFCAVCSDYASGYHYGVWSCEGCKAFFKRSIQGHNDYICPATNQCTIDKNRRKSCQACRLRKCYEVGMVKCGSRRERCGYRIVRRQRNSDEQLHCLSKTKRNGGPMTRVKELLLSALSPEQLVLTLLEAEPPHVLISRPSTPFTEASMMMSLTKLADKELVHMISWAKKIPGFVELSLYDQVRLLESCWLEVLMVGLMWRSIDHPGKLIFAPDLILDRDEGKCVEGILEIFDMLLATTSRFRELKLQHKEYLCVKAMILLNSSMYPSATAPQEADSGRKLTHLLNAVTDALVWVIAKSGMSSQQQSMRLANLLMLLSHVRHASNKGMEHLLNMKCKNVVPVYDLLLEMLNAHTLRGNKSLVTGSERNLVEDSESKEGSQKPQAQ.

The interval methionine 1 to phenylalanine 145 is modulating. 2 positions are modified to phosphoserine; by MAPK: serine 84 and serine 102. 2 consecutive NR C4-type zinc fingers follow at residues cysteine 146–cysteine 166 and cysteine 182–cysteine 206. The nuclear receptor DNA-binding region spans cysteine 146 to methionine 211. The NR LBD domain occupies serine 261–histidine 495.

It belongs to the nuclear hormone receptor family. NR3 subfamily. In terms of assembly, binds DNA as a homodimer. Can form a heterodimer with ESR1. Interacts with NCOA1, NCOA3, NCOA5 and NCOA6 coactivators, leading to a strong increase of transcription of target genes. Interacts with UBE1C and AKAP13. Interacts with DNTTIP2. Interacts with CCDC62 in the presence of estradiol/E2; this interaction seems to enhance the transcription of target genes. Interacts with DNAAF4. Interacts with PRMT2. Interacts with CCAR2 (via N-terminus) in a ligand-independent manner. Interacts with RBM39, in the presence of estradiol (E2). Interacts with STUB1/CHIP. Phosphorylation at Ser-84 and Ser-102 recruits NCOA1. As to expression, present in granulosa cells of antral follicles in various stages of follicular growth.

It localises to the nucleus. Functionally, nuclear hormone receptor. Binds estrogens with an affinity similar to that of ESR1ESR1/ER-alpha, and activates expression of reporter genes containing estrogen response elements (ERE) in an estrogen-dependent manner. The polypeptide is Estrogen receptor beta (ESR2) (Bos taurus (Bovine)).